We begin with the raw amino-acid sequence, 48 residues long: Small, acid-soluble spore protein P (48 aa).

A compositionally biased stretch (basic and acidic residues) spans 1–12 (MTNKNDGKDMRK). The tract at residues 1-48 (MTNKNDGKDMRKNAPKGAQPGQPEPLSGSKKVKNRNHTRQKHNSSHDM) is disordered. A compositionally biased stretch (basic residues) spans 30 to 48 (KKVKNRNHTRQKHNSSHDM).

It belongs to the SspP family.

Its subcellular location is the spore core. The sequence is that of Small, acid-soluble spore protein P from Bacillus licheniformis (strain ATCC 14580 / DSM 13 / JCM 2505 / CCUG 7422 / NBRC 12200 / NCIMB 9375 / NCTC 10341 / NRRL NRS-1264 / Gibson 46).